The following is a 597-amino-acid chain: Miltiradiene synthase KSL2, chloroplastic (597 aa).

Residues 1–51 (MSLAFNLRAIPFSGHTIQSRRGLFPVHESPMITTKPFVAVKCSLTTSTDLM) constitute a chloroplast transit peptide. Mg(2+) contacts are provided by D329, D333, N473, and E481. The DDXXD motif motif lies at 329–333 (DDFFD).

Belongs to the terpene synthase family. It depends on Mg(2+) as a cofactor.

It localises to the plastid. Its subcellular location is the chloroplast. The catalysed reaction is (+)-copalyl diphosphate = miltiradiene + diphosphate. The protein operates within secondary metabolite biosynthesis; terpenoid biosynthesis. Its function is as follows. Involved in the biosynthesis of ent-kaurene diterpenoids natural products such as oridonin, miltiradiene, eriocalyxin B and nezukol, known to exhibit antitumor, anti-inflammatory and antibacterial activities. Catalyzes the conversion of (+)-copalyl diphosphate ((+)-CPP) to miltiradiene. This is Miltiradiene synthase KSL2, chloroplastic from Isodon japonicus (Scutellaria japonica).